The primary structure comprises 260 residues: Phosphate import ATP-binding protein PstB (260 aa).

In terms of domain architecture, ABC transporter spans 14-255 (LQIRNLDFFY…PGKKQTEDYI (242 aa)). 46–53 (GPSGCGKS) lines the ATP pocket.

The protein belongs to the ABC transporter superfamily. Phosphate importer (TC 3.A.1.7) family. In terms of assembly, the complex is composed of two ATP-binding proteins (PstB), two transmembrane proteins (PstC and PstA) and a solute-binding protein (PstS).

The protein localises to the cell inner membrane. The enzyme catalyses phosphate(out) + ATP + H2O = ADP + 2 phosphate(in) + H(+). In terms of biological role, part of the ABC transporter complex PstSACB involved in phosphate import. Responsible for energy coupling to the transport system. This is Phosphate import ATP-binding protein PstB from Thiobacillus denitrificans (strain ATCC 25259 / T1).